Consider the following 62-residue polypeptide: Sec-independent protein translocase protein TatAc (62 aa).

A helical transmembrane segment spans residues 8 to 28; the sequence is ILVILFVGFLVFGPDKLPALG.

The protein belongs to the TatA/E family. Forms a complex with TatC.

Its subcellular location is the cell membrane. Its function is as follows. Part of the twin-arginine translocation (Tat) system that transports large folded proteins containing a characteristic twin-arginine motif in their signal peptide across membranes. TatA could form the protein-conducting channel of the Tat system. The protein is Sec-independent protein translocase protein TatAc of Bacillus subtilis (strain 168).